We begin with the raw amino-acid sequence, 528 residues long: (R)-citramalate synthase (528 aa).

A Pyruvate carboxyltransferase domain is found at 4–266; sequence VKLYDTTLRD…RECIGDDQLR (263 aa).

This sequence belongs to the alpha-IPM synthase/homocitrate synthase family.

The catalysed reaction is pyruvate + acetyl-CoA + H2O = (3R)-citramalate + CoA + H(+). It participates in amino-acid biosynthesis; L-isoleucine biosynthesis; 2-oxobutanoate from pyruvate: step 1/3. In terms of biological role, catalyzes the condensation of pyruvate and acetyl-coenzyme A to form (R)-citramalate. Makes part of the main pathway for isoleucine biosynthesis in G.sulfurreducens, i.e. the citramalate-dependent pathway. This is (R)-citramalate synthase from Geobacter sulfurreducens (strain ATCC 51573 / DSM 12127 / PCA).